A 324-amino-acid chain; its full sequence is HTH-type transcriptional regulator CysB (324 aa).

One can recognise an HTH lysR-type domain in the interval 1–59; sequence MKLQQLRYIVEVVNHNLNVSSTAEGLYTSQPGISKQVRMLEDELGIQIFARSGKHLTQV. The segment at residues 19 to 38 is a DNA-binding region (H-T-H motif); it reads VSSTAEGLYTSQPGISKQVR.

Belongs to the LysR transcriptional regulatory family. In terms of assembly, homotetramer.

It localises to the cytoplasm. Functionally, this protein is a positive regulator of gene expression for the cysteine regulon. The inducer for CysB is N-acetylserine. Thiosulfate and sulfide act as anti-inducers. The polypeptide is HTH-type transcriptional regulator CysB (cysB) (Klebsiella pneumoniae).